The sequence spans 599 residues: Zinc finger BED domain-containing protein 3 (599 aa).

Positions 70 to 104 (LNGGMGSPGNGPGTPLSRNNYAHHHQQHQNQQHVG) are disordered. The segment covering 72-81 (GGMGSPGNGP) has biased composition (gly residues). The BED-type zinc-finger motif lies at 123 to 176 (VKTAKVWRYFDELPTIEQAAECRICRKKIKATNSSTTGMIRHLRSCHVQEYQLV). 4 residues coordinate Zn(2+): cysteine 144, cysteine 147, histidine 164, and histidine 169. Disordered regions lie at residues 208–283 (GIEN…QCQN) and 440–491 (ATSS…SSID). Composition is skewed to low complexity over residues 223-246 (SQKS…SHFS) and 268-283 (SNSI…QCQN). A compositionally biased stretch (polar residues) spans 440 to 455 (ATSSYEDVSVNESQMA). Residues 460–483 (GDEEEEIMEEEVEEDENVEIEDDT) are compositionally biased toward acidic residues.

As to expression, expressed in neuronal cell bodies in the ventral cord and HSN neurons.

The protein resides in the nucleus. Its function is as follows. Probable transcription factor. Involved in vulval organogenesis. During vulval development, may play a role in the regulation of cell cycle regulators such as cul-1. Positively modulates expression of homeobox protein lin-39, perhaps by binding to regulatory regions of the lin-39 gene, acting in the vulval lineage. Plays a role in larval molting. The polypeptide is Zinc finger BED domain-containing protein 3 (Caenorhabditis elegans).